The chain runs to 198 residues: Dephospho-CoA kinase (198 aa).

Positions 3-198 constitute a DPCK domain; sequence IVGITGGIGS…LLAKERLELA (196 aa). 11 to 16 is an ATP binding site; sequence GSGKTT.

Belongs to the CoaE family.

It is found in the cytoplasm. The enzyme catalyses 3'-dephospho-CoA + ATP = ADP + CoA + H(+). Its pathway is cofactor biosynthesis; coenzyme A biosynthesis; CoA from (R)-pantothenate: step 5/5. Its function is as follows. Catalyzes the phosphorylation of the 3'-hydroxyl group of dephosphocoenzyme A to form coenzyme A. In Dehalococcoides mccartyi (strain ATCC BAA-2266 / KCTC 15142 / 195) (Dehalococcoides ethenogenes (strain 195)), this protein is Dephospho-CoA kinase.